Reading from the N-terminus, the 834-residue chain is Phenylalanine--tRNA ligase beta subunit (834 aa).

Positions 48–159 (GDIERPLVVG…GTAEPGTDAN (112 aa)) constitute a tRNA-binding domain. In terms of domain architecture, B5 spans 411 to 492 (PAPEPIRMDI…RLEGLEQIPS (82 aa)). 4 residues coordinate Mg(2+): Asp470, Asp476, Glu479, and Glu480. Positions 740 to 833 (SPFPAVLQDV…AADAVGAVLR (94 aa)) constitute an FDX-ACB domain.

The protein belongs to the phenylalanyl-tRNA synthetase beta subunit family. Type 1 subfamily. As to quaternary structure, tetramer of two alpha and two beta subunits. The cofactor is Mg(2+).

It is found in the cytoplasm. The catalysed reaction is tRNA(Phe) + L-phenylalanine + ATP = L-phenylalanyl-tRNA(Phe) + AMP + diphosphate + H(+). The chain is Phenylalanine--tRNA ligase beta subunit from Nocardia farcinica (strain IFM 10152).